We begin with the raw amino-acid sequence, 819 residues long: Leucine--tRNA ligase (819 aa).

The 'HIGH' region motif lies at 36-46 (PYPSGKIHMGH). The 'KMSKS' region motif lies at 586–590 (KMSKS). Lys589 is a binding site for ATP.

It belongs to the class-I aminoacyl-tRNA synthetase family.

It localises to the cytoplasm. It carries out the reaction tRNA(Leu) + L-leucine + ATP = L-leucyl-tRNA(Leu) + AMP + diphosphate. The polypeptide is Leucine--tRNA ligase (Wolbachia pipientis subsp. Culex pipiens (strain wPip)).